The following is a 143-amino-acid chain: MTYSITLRVFQRNPGRGFFSIVEKTVFHYANGGTWSEAKGTHTLTMGGSGTSGVLRFMSDKGELITVAVGVHNYKRWCDVVTGLKPEETALVINPQYYNNGPRAYTREKQLAEYNVTSVVGTRFEVKYTVVEGNNLEANVIFS.

Beta-D-Gal-(1-&gt;3)-alpha-D-GalNAc contacts are provided by residues Ala-30, 49–50 (SG), and 72–73 (HN). Residues 49–50 (SG) and 72–73 (HN) each bind N-acetyl-alpha-D-galactosamine. N,N'-diacetylchitobiose contacts are provided by residues 79-82 (DVVT), Arg-103, and Tyr-114. N-acetyl-alpha-D-glucosamine-binding positions include 79 to 82 (DVVT), Arg-103, and Tyr-114.

This sequence belongs to the fungal fruit body lectin family. In terms of assembly, homotetramer.

Lectin that recognizes O-linked galactose-beta-1,3-N-acetylgalactosamine, a disaccharide (Thomsen-Friedenreich antigen or T-disaccharide), present on cell surface glycoproteins. Can also bind chitin, N,N'-diacetylchitobiose, N-acetylgalactosamine and N-acetylglucosamine. Inhibits proliferation of colon, breast and liver cancer cell lines (in vitro). This chain is Boletus edulis lectin, found in Boletus edulis (King bolete).